Reading from the N-terminus, the 339-residue chain is Heat-inducible transcription repressor HrcA (339 aa).

It belongs to the HrcA family.

Its function is as follows. Negative regulator of class I heat shock genes (grpE-dnaK-dnaJ and groELS operons). Prevents heat-shock induction of these operons. The protein is Heat-inducible transcription repressor HrcA of Thiobacillus denitrificans (strain ATCC 25259 / T1).